The chain runs to 119 residues: Large ribosomal subunit protein uL22c (119 aa).

This sequence belongs to the universal ribosomal protein uL22 family. Part of the 50S ribosomal subunit.

It is found in the plastid. Its subcellular location is the chloroplast. In terms of biological role, this protein binds specifically to 23S rRNA. Functionally, the globular domain of the protein is located near the polypeptide exit tunnel on the outside of the subunit, while an extended beta-hairpin is found that lines the wall of the exit tunnel in the center of the 70S ribosome. This is Large ribosomal subunit protein uL22c (rpl22) from Spirogyra maxima (Green alga).